The chain runs to 96 residues: Co-chaperonin GroES (96 aa).

Belongs to the GroES chaperonin family. In terms of assembly, heptamer of 7 subunits arranged in a ring. Interacts with the chaperonin GroEL.

It is found in the cytoplasm. In terms of biological role, together with the chaperonin GroEL, plays an essential role in assisting protein folding. The GroEL-GroES system forms a nano-cage that allows encapsulation of the non-native substrate proteins and provides a physical environment optimized to promote and accelerate protein folding. GroES binds to the apical surface of the GroEL ring, thereby capping the opening of the GroEL channel. The polypeptide is Co-chaperonin GroES (Methylobacterium radiotolerans (strain ATCC 27329 / DSM 1819 / JCM 2831 / NBRC 15690 / NCIMB 10815 / 0-1)).